Here is a 158-residue protein sequence, read N- to C-terminus: Encapsulin nanocompartment cargo protein EncB (158 aa).

Glu-22, Glu-52, and His-55 together coordinate Fe cation. 2 consecutive short sequence motifs (di-iron-binding motif) follow at residues 52–55 and 58–61; these read EKEH and EAVH. The segment at 92–158 is disordered; it reads ATVHVPTPDG…RGGGGSGSGR (67 aa). Residues 142–149 are probable targeting peptide; sequence LTVGSLRR. Residues 148–158 show a composition bias toward gly residues; it reads RRGGGGSGSGR.

The protein belongs to the ferritin-like superfamily.

It localises to the encapsulin nanocompartment. Cargo protein of a type 1 encapsulin nanocompartment. May help nucleate Fe atoms in the interior of the encapsulin nanocompartment. Present in about 36 copies/encapsulin nanocompartment. The protein is Encapsulin nanocompartment cargo protein EncB of Myxococcus xanthus (strain DK1622).